A 309-amino-acid chain; its full sequence is Homoserine kinase (309 aa).

Position 91-101 (91-101 (PIGSGLGSSAC)) interacts with ATP.

This sequence belongs to the GHMP kinase family. Homoserine kinase subfamily.

It is found in the cytoplasm. The enzyme catalyses L-homoserine + ATP = O-phospho-L-homoserine + ADP + H(+). It functions in the pathway amino-acid biosynthesis; L-threonine biosynthesis; L-threonine from L-aspartate: step 4/5. Its function is as follows. Catalyzes the ATP-dependent phosphorylation of L-homoserine to L-homoserine phosphate. This is Homoserine kinase from Buchnera aphidicola subsp. Acyrthosiphon pisum (strain 5A).